The primary structure comprises 215 residues: Thymidylate kinase (215 aa).

11–18 (GIDGAGKS) is an ATP binding site.

This sequence belongs to the thymidylate kinase family.

It carries out the reaction dTMP + ATP = dTDP + ADP. Functionally, phosphorylation of dTMP to form dTDP in both de novo and salvage pathways of dTTP synthesis. This is Thymidylate kinase from Nitrosomonas eutropha (strain DSM 101675 / C91 / Nm57).